The following is a 918-amino-acid chain: DNA ligase 1 (918 aa).

Residues 1–15 (MQRSIMSFFQPTTTE) are compositionally biased toward polar residues. Residues 1–271 (MQRSIMSFFQ…DPTNYNPSKS (271 aa)) form a disordered region. Residues 16 to 54 (GKAKKPEKEIPSSIREKEPPPKVALKERNRAVPESDSPV) are compositionally biased toward basic and acidic residues. A phosphoserine mark is found at serine 50, serine 52, serine 66, and serine 67. Phosphothreonine is present on threonine 78. The span at 81–92 (VQKPVSDSKQSS) shows a compositional bias: low complexity. A compositionally biased stretch (polar residues) spans 100-114 (PENSPVFNCSPSMDI). Residues 120-130 (PKRRTARKQLP) show a composition bias toward basic residues. Position 145 is an N6-acetyllysine (lysine 145). The residue at position 195 (threonine 195) is a Phosphothreonine. N6-acetyllysine is present on lysine 227. Serine 230 and serine 231 each carry phosphoserine. Threonine 234 carries the phosphothreonine modification. Basic and acidic residues predominate over residues 240-259 (VKTEVKQEESDTPRKEETKG). Glutamate 566 is an ATP binding site. Lysine 568 (N6-AMP-lysine intermediate) is an active-site residue. Residues arginine 573 and glutamate 621 each contribute to the ATP site. Residue glutamate 621 participates in Mg(2+) binding. The interaction with target DNA stretch occupies residues 642–644 (KRK). Glutamate 720 is a Mg(2+) binding site. The ATP site is built by lysine 725 and lysine 744. Position 798 is a phosphothreonine (threonine 798). Phosphoserine is present on residues serine 801, serine 908, serine 909, and serine 913. A disordered region spans residues 881–918 (DKQPEQATTSDQVASLYRKQSQIQNQQSSDLDSDVEDY). The segment covering 885–910 (EQATTSDQVASLYRKQSQIQNQQSSD) has biased composition (polar residues).

Belongs to the ATP-dependent DNA ligase family. As to quaternary structure, interacts with PCNA. Interacts with POLB. Mg(2+) is required as a cofactor.

The protein resides in the nucleus. The enzyme catalyses ATP + (deoxyribonucleotide)n-3'-hydroxyl + 5'-phospho-(deoxyribonucleotide)m = (deoxyribonucleotide)n+m + AMP + diphosphate.. Its function is as follows. DNA ligase that seals nicks in double-stranded during DNA repair. Also involved in DNA replication and DNA recombination. The polypeptide is DNA ligase 1 (Lig1) (Rattus norvegicus (Rat)).